A 331-amino-acid chain; its full sequence is Biotin synthase (331 aa).

Residues 51 to 278 form the Radical SAM core domain; sequence QTIQLSTLMS…KSYVRLSAGR (228 aa). [4Fe-4S] cluster-binding residues include Cys66, Cys70, and Cys73. [2Fe-2S] cluster is bound by residues Cys110, Cys141, Cys201, and Arg273.

This sequence belongs to the radical SAM superfamily. Biotin synthase family. Homodimer. [4Fe-4S] cluster is required as a cofactor. The cofactor is [2Fe-2S] cluster.

The catalysed reaction is (4R,5S)-dethiobiotin + (sulfur carrier)-SH + 2 reduced [2Fe-2S]-[ferredoxin] + 2 S-adenosyl-L-methionine = (sulfur carrier)-H + biotin + 2 5'-deoxyadenosine + 2 L-methionine + 2 oxidized [2Fe-2S]-[ferredoxin]. It participates in cofactor biosynthesis; biotin biosynthesis; biotin from 7,8-diaminononanoate: step 2/2. Functionally, catalyzes the conversion of dethiobiotin (DTB) to biotin by the insertion of a sulfur atom into dethiobiotin via a radical-based mechanism. The sequence is that of Biotin synthase from Histophilus somni (strain 129Pt) (Haemophilus somnus).